Reading from the N-terminus, the 257-residue chain is Cobalt transport protein CbiM (257 aa).

A signal peptide spans methionine 1–alanine 33. The next 6 membrane-spanning stretches (helical) occupy residues glycine 39 to tryptophan 59, serine 74 to proline 94, leucine 117 to glycine 137, leucine 138 to leucine 158, alanine 171 to leucine 191, and leucine 214 to tryptophan 234.

The protein belongs to the CbiM family. Forms an energy-coupling factor (ECF) transporter complex composed of an ATP-binding protein (A component, CbiO), a transmembrane protein (T component, CbiQ) and 2 possible substrate-capture proteins (S components, CbiM and CbiN) of unknown stoichimetry.

The protein resides in the cell inner membrane. It participates in cofactor biosynthesis; adenosylcobalamin biosynthesis. In terms of biological role, part of the energy-coupling factor (ECF) transporter complex CbiMNOQ involved in cobalt import. This is Cobalt transport protein CbiM from Thermosynechococcus vestitus (strain NIES-2133 / IAM M-273 / BP-1).